We begin with the raw amino-acid sequence, 156 residues long: Small ribosomal subunit protein uS7 (156 aa).

Belongs to the universal ribosomal protein uS7 family. In terms of assembly, part of the 30S ribosomal subunit. Contacts proteins S9 and S11.

Functionally, one of the primary rRNA binding proteins, it binds directly to 16S rRNA where it nucleates assembly of the head domain of the 30S subunit. Is located at the subunit interface close to the decoding center, probably blocks exit of the E-site tRNA. The sequence is that of Small ribosomal subunit protein uS7 from Azotobacter vinelandii (strain DJ / ATCC BAA-1303).